The following is a 623-amino-acid chain: Bifunctional methionine biosynthesis protein MetXA/MetW (623 aa).

Over residues 1-17 (MTSGRSTRVTMFESQAS) the composition is skewed to polar residues. Residues 1–30 (MTSGRSTRVTMFESQASMGEPSNEDLSSTD) form a disordered region. Positions 77–385 (NAVLVCHAVS…TTNAGHDAFL (309 aa)) constitute an AB hydrolase-1 domain. Serine 183 (nucleophile) is an active-site residue. Substrate is bound at residue arginine 253. Residues aspartate 348 and histidine 381 contribute to the active site. Substrate is bound at residue aspartate 382. Residues 417-619 (NVDEESILEI…NADTAVIAFH (203 aa)) are metW.

It in the N-terminal section; belongs to the AB hydrolase superfamily. MetX family. The protein in the C-terminal section; belongs to the MetW family. As to quaternary structure, homodimer.

It localises to the cytoplasm. The catalysed reaction is L-homoserine + acetyl-CoA = O-acetyl-L-homoserine + CoA. Its pathway is amino-acid biosynthesis; L-methionine biosynthesis via de novo pathway; O-acetyl-L-homoserine from L-homoserine: step 1/1. Its function is as follows. Transfers an acetyl group from acetyl-CoA to L-homoserine, forming acetyl-L-homoserine. This chain is Bifunctional methionine biosynthesis protein MetXA/MetW, found in Rhodopirellula baltica (strain DSM 10527 / NCIMB 13988 / SH1).